The sequence spans 583 residues: Threonine--tRNA ligase (583 aa).

The catalytic stretch occupies residues 185–478 (DHRKLGRELD…LVEHYGGAFP (294 aa)). 3 residues coordinate Zn(2+): Cys278, His329, and His455.

It belongs to the class-II aminoacyl-tRNA synthetase family. As to quaternary structure, homodimer. Zn(2+) serves as cofactor.

It localises to the cytoplasm. The catalysed reaction is tRNA(Thr) + L-threonine + ATP = L-threonyl-tRNA(Thr) + AMP + diphosphate + H(+). Catalyzes the attachment of threonine to tRNA(Thr) in a two-step reaction: L-threonine is first activated by ATP to form Thr-AMP and then transferred to the acceptor end of tRNA(Thr). Also edits incorrectly charged L-seryl-tRNA(Thr). The protein is Threonine--tRNA ligase of Borrelia turicatae (strain 91E135).